The chain runs to 269 residues: MADDEKKAAAPAAAPAAAAKPAAPAAAPAANGKAAPAANGKAAPAAAAAPAGPPKDPNDPKVKAEEAKKAKQAEIERKRAEVRKRMEEASKAKKAKKGFMTPERKKKLRLLLRKKAAEELKKEQERKAAERRRIIEERCGSPRNLSDASEGELQEICEEYYERMYICEGQKWDLEYEVRKKDWEINDLNAQVNDLRGKFVKPALKKVSKYENKFAKLQKKAAEFNFRNQLKVVKKKEFTLEEEEKEKKPDWSKGKPGDAKVKEEVEAEA.

The interval 1-104 (MADDEKKAAA…AKKGFMTPER (104 aa)) is disordered. N-acetylalanine is present on Ala2. The span at 9–50 (AAPAAAPAAAAKPAAPAAAPAANGKAAPAANGKAAPAAAAAP) shows a compositional bias: low complexity. Basic and acidic residues predominate over residues 56–91 (DPNDPKVKAEEAKKAKQAEIERKRAEVRKRMEEASK). A troponin T-interaction region spans residues 162–171 (ERMYICEGQK). Positions 189–202 (NAQVNDLRGKFVKP) are actin-binding. N6,N6,N6-trimethyllysine occurs at positions 201 and 205. The segment at 239–269 (TLEEEEKEKKPDWSKGKPGDAKVKEEVEAEA) is disordered.

The protein belongs to the troponin I family. Binds to actin and tropomyosin. All isoforms are expressed in somatic muscle. Isoforms containing exon 6a1 (isoforms 1 and 2) are expressed in all muscles but highest expression is in abdominal muscle and splanchnic muscle of the gut. Isoforms containing exon 6b1 (isoforms 5, 6, 9 and 10) are highly expressed in the tergal depressor of trochanter (TDT) muscle.

Its function is as follows. Troponin I is the ATPase inhibitory subunit of troponin in the thin filament regulatory complex. Involved in the development and maintenance of muscle and nervous system. May also be involved in the cytoskeletal apparatus. In Drosophila melanogaster (Fruit fly), this protein is Troponin I (wupA).